A 160-amino-acid polypeptide reads, in one-letter code: Large ribosomal subunit protein uL22c (160 aa).

It belongs to the universal ribosomal protein uL22 family. As to quaternary structure, part of the 50S ribosomal subunit.

The protein resides in the plastid. The protein localises to the chloroplast. This protein binds specifically to 23S rRNA. Its function is as follows. The globular domain of the protein is located near the polypeptide exit tunnel on the outside of the subunit, while an extended beta-hairpin is found that lines the wall of the exit tunnel in the center of the 70S ribosome. In Olimarabidopsis pumila (Dwarf rocket), this protein is Large ribosomal subunit protein uL22c (rpl22).